A 500-amino-acid polypeptide reads, in one-letter code: Bifunctional protein GlmU (500 aa).

The interval 1 to 242 (MPVQTAVVVL…SAKVAGANDR (242 aa)) is pyrophosphorylase. UDP-N-acetyl-alpha-D-glucosamine contacts are provided by residues 10–13 (LAAG), Lys-24, Gln-81, and 86–87 (GT). Asp-112 contributes to the Mg(2+) binding site. Residues Gly-151, Glu-167, Asn-182, and Asn-240 each contribute to the UDP-N-acetyl-alpha-D-glucosamine site. Asn-240 contacts Mg(2+). Positions 243–263 (VQLSRLAAELNRRTVENWMRA) are linker. The segment at 264-500 (GVTVVDPSTT…KQDLKDGIEQ (237 aa)) is N-acetyltransferase. Positions 345 and 363 each coordinate UDP-N-acetyl-alpha-D-glucosamine. His-375 (proton acceptor) is an active-site residue. Tyr-378 and Asn-389 together coordinate UDP-N-acetyl-alpha-D-glucosamine. Acetyl-CoA-binding positions include Ala-392, 398–399 (NY), Ser-417, and Ala-435. A disordered region spans residues 472–500 (AEAAAAAGLHHSSDLHETEKQDLKDGIEQ). Over residues 482–500 (HSSDLHETEKQDLKDGIEQ) the composition is skewed to basic and acidic residues.

It in the N-terminal section; belongs to the N-acetylglucosamine-1-phosphate uridyltransferase family. This sequence in the C-terminal section; belongs to the transferase hexapeptide repeat family. As to quaternary structure, homotrimer. Requires Mg(2+) as cofactor.

The protein localises to the cytoplasm. It catalyses the reaction alpha-D-glucosamine 1-phosphate + acetyl-CoA = N-acetyl-alpha-D-glucosamine 1-phosphate + CoA + H(+). The enzyme catalyses N-acetyl-alpha-D-glucosamine 1-phosphate + UTP + H(+) = UDP-N-acetyl-alpha-D-glucosamine + diphosphate. The protein operates within nucleotide-sugar biosynthesis; UDP-N-acetyl-alpha-D-glucosamine biosynthesis; N-acetyl-alpha-D-glucosamine 1-phosphate from alpha-D-glucosamine 6-phosphate (route II): step 2/2. It functions in the pathway nucleotide-sugar biosynthesis; UDP-N-acetyl-alpha-D-glucosamine biosynthesis; UDP-N-acetyl-alpha-D-glucosamine from N-acetyl-alpha-D-glucosamine 1-phosphate: step 1/1. It participates in bacterial outer membrane biogenesis; LPS lipid A biosynthesis. In terms of biological role, catalyzes the last two sequential reactions in the de novo biosynthetic pathway for UDP-N-acetylglucosamine (UDP-GlcNAc). The C-terminal domain catalyzes the transfer of acetyl group from acetyl coenzyme A to glucosamine-1-phosphate (GlcN-1-P) to produce N-acetylglucosamine-1-phosphate (GlcNAc-1-P), which is converted into UDP-GlcNAc by the transfer of uridine 5-monophosphate (from uridine 5-triphosphate), a reaction catalyzed by the N-terminal domain. The chain is Bifunctional protein GlmU from Rhodococcus jostii (strain RHA1).